Reading from the N-terminus, the 192-residue chain is uncharacterized protein (192 aa).

To M.thermoautotrophicum MTH863.

This is an uncharacterized protein from Methanocaldococcus jannaschii (strain ATCC 43067 / DSM 2661 / JAL-1 / JCM 10045 / NBRC 100440) (Methanococcus jannaschii).